Reading from the N-terminus, the 484-residue chain is ATP synthase subunit beta (484 aa).

152–159 (GGAGVGKT) contacts ATP.

The protein belongs to the ATPase alpha/beta chains family. In terms of assembly, F-type ATPases have 2 components, CF(1) - the catalytic core - and CF(0) - the membrane proton channel. CF(1) has five subunits: alpha(3), beta(3), gamma(1), delta(1), epsilon(1). CF(0) has three main subunits: a(1), b(2) and c(9-12). The alpha and beta chains form an alternating ring which encloses part of the gamma chain. CF(1) is attached to CF(0) by a central stalk formed by the gamma and epsilon chains, while a peripheral stalk is formed by the delta and b chains.

It is found in the cell inner membrane. It catalyses the reaction ATP + H2O + 4 H(+)(in) = ADP + phosphate + 5 H(+)(out). In terms of biological role, produces ATP from ADP in the presence of a proton gradient across the membrane. The catalytic sites are hosted primarily by the beta subunits. This is ATP synthase subunit beta from Campylobacter lari (strain RM2100 / D67 / ATCC BAA-1060).